The sequence spans 62 residues: DNA-binding protein 7 (62 aa).

Belongs to the 7 kDa DNA-binding/endoribonuclease P2 family. In terms of assembly, monomer.

The protein resides in the cytoplasm. Its function is as follows. Can constrain negative DNA supercoils. May be involved in maintaining the integrity of the genome at high temperature. In Metallosphaera cuprina (strain Ar-4), this protein is DNA-binding protein 7.